A 93-amino-acid polypeptide reads, in one-letter code: Large ribosomal subunit protein uL23 (93 aa).

It belongs to the universal ribosomal protein uL23 family. As to quaternary structure, part of the 50S ribosomal subunit. Contacts protein L29, and trigger factor when it is bound to the ribosome.

Functionally, one of the early assembly proteins it binds 23S rRNA. One of the proteins that surrounds the polypeptide exit tunnel on the outside of the ribosome. Forms the main docking site for trigger factor binding to the ribosome. This Sulfurovum sp. (strain NBC37-1) protein is Large ribosomal subunit protein uL23.